The sequence spans 49 residues: DNA-directed RNA polymerase subunit Rpo12 (49 aa).

Zn(2+) is bound by residues Cys-11, Cys-27, and Cys-30.

The protein belongs to the archaeal Rpo12/eukaryotic RPC10 RNA polymerase subunit family. In terms of assembly, part of the RNA polymerase complex. Zn(2+) serves as cofactor.

The protein localises to the cytoplasm. It carries out the reaction RNA(n) + a ribonucleoside 5'-triphosphate = RNA(n+1) + diphosphate. In terms of biological role, DNA-dependent RNA polymerase (RNAP) catalyzes the transcription of DNA into RNA using the four ribonucleoside triphosphates as substrates. In Pyrococcus horikoshii (strain ATCC 700860 / DSM 12428 / JCM 9974 / NBRC 100139 / OT-3), this protein is DNA-directed RNA polymerase subunit Rpo12.